We begin with the raw amino-acid sequence, 420 residues long: Serine hydroxymethyltransferase (420 aa).

(6S)-5,6,7,8-tetrahydrofolate contacts are provided by residues leucine 121 and glycine 125–leucine 127. Lysine 230 is modified (N6-(pyridoxal phosphate)lysine). (6S)-5,6,7,8-tetrahydrofolate contacts are provided by residues glutamate 246 and serine 354–phenylalanine 356.

Belongs to the SHMT family. Homodimer. It depends on pyridoxal 5'-phosphate as a cofactor.

Its subcellular location is the cytoplasm. The enzyme catalyses (6R)-5,10-methylene-5,6,7,8-tetrahydrofolate + glycine + H2O = (6S)-5,6,7,8-tetrahydrofolate + L-serine. The protein operates within one-carbon metabolism; tetrahydrofolate interconversion. It functions in the pathway amino-acid biosynthesis; glycine biosynthesis; glycine from L-serine: step 1/1. Its function is as follows. Catalyzes the reversible interconversion of serine and glycine with tetrahydrofolate (THF) serving as the one-carbon carrier. This reaction serves as the major source of one-carbon groups required for the biosynthesis of purines, thymidylate, methionine, and other important biomolecules. Also exhibits THF-independent aldolase activity toward beta-hydroxyamino acids, producing glycine and aldehydes, via a retro-aldol mechanism. This Rickettsia rickettsii (strain Iowa) protein is Serine hydroxymethyltransferase.